Here is a 333-residue protein sequence, read N- to C-terminus: Foldase protein PrsA (333 aa).

A signal peptide spans 1 to 19 (MKKRHLLIAGLACMTILGA). Cys-20 is lipidated: N-palmitoyl cysteine. A lipid anchor (S-diacylglycerol cysteine) is attached at Cys-20. The region spanning 155–245 (LIEVEASHIL…YGYHIILVTD (91 aa)) is the PpiC domain. A disordered region spans residues 291-333 (GLFDLPDAPPVEDTPEIDGEDASDEAEDQAEDADENAEEEDES). The segment covering 303–333 (DTPEIDGEDASDEAEDQAEDADENAEEEDES) has biased composition (acidic residues).

Belongs to the PrsA family.

The protein resides in the cell membrane. The catalysed reaction is [protein]-peptidylproline (omega=180) = [protein]-peptidylproline (omega=0). Its function is as follows. Plays a major role in protein secretion by helping the post-translocational extracellular folding of several secreted proteins. The chain is Foldase protein PrsA from Halalkalibacterium halodurans (strain ATCC BAA-125 / DSM 18197 / FERM 7344 / JCM 9153 / C-125) (Bacillus halodurans).